Here is a 197-residue protein sequence, read N- to C-terminus: Nucleoside triphosphate pyrophosphatase (197 aa).

The Proton acceptor role is filled by D71.

The protein belongs to the Maf family. Requires a divalent metal cation as cofactor.

The protein resides in the cytoplasm. The enzyme catalyses a ribonucleoside 5'-triphosphate + H2O = a ribonucleoside 5'-phosphate + diphosphate + H(+). It carries out the reaction a 2'-deoxyribonucleoside 5'-triphosphate + H2O = a 2'-deoxyribonucleoside 5'-phosphate + diphosphate + H(+). Nucleoside triphosphate pyrophosphatase. May have a dual role in cell division arrest and in preventing the incorporation of modified nucleotides into cellular nucleic acids. This Synechococcus sp. (strain JA-3-3Ab) (Cyanobacteria bacterium Yellowstone A-Prime) protein is Nucleoside triphosphate pyrophosphatase.